The chain runs to 384 residues: Terpene cyclase ascI (384 aa).

An N-terminal signal peptide occupies residues 1–25 (MPQLAGKLILAGLIPLGAWVLHGFA). The helical transmembrane segment at 82–102 (LSLHAFMFAGQGVPLLVLNML) threads the bilayer. Asn-109 carries N-linked (GlcNAc...) asparagine glycosylation. 4 helical membrane-spanning segments follow: residues 119–139 (VFGI…YLFL), 164–184 (AVGF…SLPH), 194–214 (VLSV…AYFA), and 235–255 (GAVY…TFAI). N-linked (GlcNAc...) asparagine glycosylation occurs at Asn-258. Transmembrane regions (helical) follow at residues 291–311 (WFLQ…AIGI) and 330–350 (IALR…ALSL). N-linked (GlcNAc...) asparagine glycosylation is present at Asn-372.

The protein belongs to the membrane-bound ascI terpene cyclase family.

Its subcellular location is the membrane. The enzyme catalyses 16-hydroxy-ilicicolin A epoxide = ascofuranol. The protein operates within secondary metabolite biosynthesis; terpenoid biosynthesis. Epoxide hydrolase; part of the asc-2 gene cluster that mediates the biosynthesis of ascofuranone, a strong inhibitor of cyanide-insensitive alternative oxidases and a promising drug candidate against African trypanosomiasis. The first step in the pathway is performed by the non-reducing polyketide synthase ascC that produces orsellinic acid by condensing acetyl-CoA with 3 malonyl-CoA units. Orsellinic acid is then prenylated by the prenyltransferase ascA to yield ilicicolinic acid B. Ilicicolinic acid B is further reduced to ilicicolin B by the reductase ascB. The halogenase ascD then chlorinates ilicicolin B to produce ilicicolin A which is converted to ilicicolin A epoxide by the cytochrome P450 monooxygenase ascE that catalyzes stereoselective epoxidation of the terminal double bond of the prenyl group. Ilicicolin A epoxide is the last common precursor for the biosynthesis of ascofuranone and ascochlorin. The terpene cyclase ascF produces a monocyclic terpene, and the cyclization reaction is proposed to be initiated by protonation of the terminal epoxide of ilicicolin A epoxide to generate a monocyclic tertiarycation, which is followed by a series of hydride and methyl shifts with abstraction of proton, leading to the formation of the (14S,15R,19R)-trimethylcyclohexanone ring structure of ilicicolin C, which is finally reduced to ascochlorin by the dehydrogenase ascG. On the other hand, ilicicolin A epoxide is hydroxylated by the cytochrome P450 monooxygenase ascH, and the resultant product is cyclized by the terpene cyclase ascI to ascofuranol via protonation-initiated epoxide ring opening, which facilitates the 6-endo-tet cyclization to form the tetrahy-drofuran ring. Finally, ascofuranol is oxidized into ascofuranone by ascJ. The protein is Terpene cyclase ascI of Acremonium egyptiacum (Oospora egyptiaca).